We begin with the raw amino-acid sequence, 121 residues long: Protein MGF 110-5L (121 aa).

The first 20 residues, 1–20 (MLVIFLGILGLLANQVSSQL), serve as a signal peptide directing secretion. N-linked (GlcNAc...) asparagine; by host glycosylation is found at asparagine 62 and asparagine 116.

It belongs to the asfivirus MGF 110 family.

This African swine fever virus (isolate Portugal/Lis 57/1957) (ASFV) protein is Protein MGF 110-5L.